The primary structure comprises 24 residues: Hyaluronidase (24 aa).

As to expression, expressed by the venom gland.

The protein localises to the secreted. It catalyses the reaction Random hydrolysis of (1-&gt;4)-linkages between N-acetyl-beta-D-glucosamine and D-glucuronate residues in hyaluronate.. In terms of biological role, possesses high activity against hyaluronan in vitro. The sequence is that of Hyaluronidase from Tityus stigmurus (Brazilian scorpion).